The chain runs to 290 residues: Probable ECF RNA polymerase sigma factor SigI (290 aa).

Positions 11–74 are sigma-70 factor domain-2; that stretch reads WRAHRAYLVD…LCLDHIKSAS (64 aa). Residues 34–37 carry the Polymerase core binding motif; sequence DMVQ. Residues 110-162 are sigma-70 factor domain-4_2; the sequence is LALLIMLERLGPAERVVFVLHEIFGLPYQQIATTIGSQASTCRQLAHRARRKI. Positions 137 to 156 form a DNA-binding region, H-T-H motif; that stretch reads YQQIATTIGSQASTCRQLAH.

Belongs to the sigma-70 factor family. ECF subfamily. In terms of assembly, interacts transiently with the RNA polymerase catalytic core formed by RpoA, RpoB, RpoC and RpoZ (2 alpha, 1 beta, 1 beta' and 1 omega subunit) to form the RNA polymerase holoenzyme that can initiate transcription.

Functionally, sigma factors are initiation factors that promote the attachment of RNA polymerase to specific initiation sites and are then released. Extracytoplasmic function (ECF) sigma factors are held in an inactive form by a cognate anti-sigma factor until released, although no anti-sigma factor is known for this protein. This Mycobacterium tuberculosis (strain CDC 1551 / Oshkosh) protein is Probable ECF RNA polymerase sigma factor SigI (sigI).